The primary structure comprises 186 residues: Interferon beta (186 aa).

An N-terminal signal peptide occupies residues 1-21 (MTYRWILPMALLLCFSTTALS). Tyrosine 24 bears the Phosphotyrosine mark. The cysteines at positions 52 and 161 are disulfide-linked. Residues asparagine 101 and asparagine 136 are each glycosylated (N-linked (GlcNAc...) asparagine).

Belongs to the alpha/beta interferon family. In terms of assembly, monomer.

It localises to the secreted. Type I interferon cytokine that plays a key role in the innate immune response to infection, developing tumors and other inflammatory stimuli. Signals via binding to high-affinity (IFNAR2) and low-affinity (IFNAR1) heterodimeric receptor, activating the canonical Jak-STAT signaling pathway resulting in transcriptional activation or repression of interferon-regulated genes that encode the effectors of the interferon response, such as antiviral proteins, regulators of cell proliferation and differentiation, and immunoregulatory proteins. Signals mostly via binding to a IFNAR1-IFNAR2 heterodimeric receptor, but can also function with IFNAR1 alone and independently of Jak-STAT pathways. Elicits a wide variety of responses, including antiviral and antibacterial activities, and can regulate the development of B-cells, myelopoiesis and lipopolysaccharide (LPS)-inducible production of tumor necrosis factor. Plays a role in neuronal homeostasis by regulating dopamine turnover and protecting dopaminergic neurons: acts by promoting neuronal autophagy and alpha-synuclein clearance, thereby preventing dopaminergic neuron loss. IFNB1 is more potent than interferon-alpha (IFN-alpha) in inducing the apoptotic and antiproliferative pathways required for control of tumor cell growth. The chain is Interferon beta (IFNB1) from Equus caballus (Horse).